We begin with the raw amino-acid sequence, 218 residues long: Imidazole glycerol phosphate synthase subunit HisH (218 aa).

A Glutamine amidotransferase type-1 domain is found at 12-218 (SIVVVDYGLG…RNFVDYCADQ (207 aa)). The active-site Nucleophile is C88. Residues H196 and E198 contribute to the active site.

As to quaternary structure, heterodimer of HisH and HisF.

The protein resides in the cytoplasm. It carries out the reaction 5-[(5-phospho-1-deoxy-D-ribulos-1-ylimino)methylamino]-1-(5-phospho-beta-D-ribosyl)imidazole-4-carboxamide + L-glutamine = D-erythro-1-(imidazol-4-yl)glycerol 3-phosphate + 5-amino-1-(5-phospho-beta-D-ribosyl)imidazole-4-carboxamide + L-glutamate + H(+). It catalyses the reaction L-glutamine + H2O = L-glutamate + NH4(+). Its pathway is amino-acid biosynthesis; L-histidine biosynthesis; L-histidine from 5-phospho-alpha-D-ribose 1-diphosphate: step 5/9. IGPS catalyzes the conversion of PRFAR and glutamine to IGP, AICAR and glutamate. The HisH subunit catalyzes the hydrolysis of glutamine to glutamate and ammonia as part of the synthesis of IGP and AICAR. The resulting ammonia molecule is channeled to the active site of HisF. The sequence is that of Imidazole glycerol phosphate synthase subunit HisH from Halobacterium salinarum (strain ATCC 700922 / JCM 11081 / NRC-1) (Halobacterium halobium).